A 488-amino-acid polypeptide reads, in one-letter code: Kynurenine 3-monooxygenase 2 (488 aa).

Belongs to the aromatic-ring hydroxylase family. KMO subfamily. FAD is required as a cofactor.

It localises to the mitochondrion outer membrane. It carries out the reaction L-kynurenine + NADPH + O2 + H(+) = 3-hydroxy-L-kynurenine + NADP(+) + H2O. It participates in cofactor biosynthesis; NAD(+) biosynthesis; quinolinate from L-kynurenine: step 1/3. In terms of biological role, catalyzes the hydroxylation of L-kynurenine (L-Kyn) to form 3-hydroxy-L-kynurenine (L-3OHKyn). Required for synthesis of quinolinic acid. The sequence is that of Kynurenine 3-monooxygenase 2 (bna4-2) from Aspergillus niger (strain ATCC MYA-4892 / CBS 513.88 / FGSC A1513).